The following is a 328-amino-acid chain: Putative gluconeogenesis factor (328 aa).

The protein belongs to the gluconeogenesis factor family.

It is found in the cytoplasm. Functionally, required for morphogenesis under gluconeogenic growth conditions. In Aquifex aeolicus (strain VF5), this protein is Putative gluconeogenesis factor.